The chain runs to 211 residues: Large ribosomal subunit protein uL3 (211 aa).

A disordered region spans residues 122–156 (NQKRNNFGRGPMSHGSKNHRAPGSIGAGTTPGRVY).

This sequence belongs to the universal ribosomal protein uL3 family. In terms of assembly, part of the 50S ribosomal subunit. Forms a cluster with proteins L14 and L19.

Functionally, one of the primary rRNA binding proteins, it binds directly near the 3'-end of the 23S rRNA, where it nucleates assembly of the 50S subunit. This chain is Large ribosomal subunit protein uL3, found in Nostoc sp. (strain PCC 7120 / SAG 25.82 / UTEX 2576).